The following is an 87-amino-acid chain: Spermatid-specific protein S1 (87 aa).

Positions 1–36 are disordered; sequence TKSRYRNRRSRPRRRYGRRMRKTRCRRKGRRISRRP.

Its subcellular location is the nucleus. It is found in the chromosome. Its function is as follows. Involved in nuclear basic protein transition: histones are replaced by spermatid specific proteins which are themselves replaced by protamines in late spermatids. This chain is Spermatid-specific protein S1, found in Scyliorhinus canicula (Small-spotted catshark).